The chain runs to 658 residues: Alkyldihydroxyacetonephosphate synthase, peroxisomal (658 aa).

The segment covering 1–24 (MAEAAAAAAAAAAAGETSASSGSA) has biased composition (low complexity). Residues 1 to 37 (MAEAAAAAAAAAAAGETSASSGSAAERDPDQDRAGRR) are disordered. A peroxisome-targeting transit peptide spans 1-58 (MAEAAAAAAAAAAAGETSASSGSAAERDPDQDRAGRRLRVLSGHLLGRPQEALSTNEC). Residues 25-35 (AERDPDQDRAG) show a composition bias toward basic and acidic residues. Ser-65 bears the Phosphoserine mark. Thr-74 carries the phosphothreonine modification. At Lys-102 the chain carries N6-acetyllysine. In terms of domain architecture, FAD-binding PCMH-type spans 202 to 384 (FERIPDIVLW…TEATIKIRPT (183 aa)). FAD contacts are provided by residues 234 to 240 (PIGGGTS), 303 to 309 (DSLEFST), and 316 to 319 (TRAS). At Lys-347 the chain carries N6-acetyllysine. 368-374 (EGTLGVI) is an FAD binding site. Arg-515 is a substrate binding site. Tyr-578 acts as the Proton donor/acceptor in catalysis. Important for enzyme activity stretches follow at residues 615–617 (HHH) and 654–658 (NRNLL).

This sequence belongs to the FAD-binding oxidoreductase/transferase type 4 family. As to quaternary structure, homodimer. FAD is required as a cofactor.

It is found in the peroxisome membrane. The protein localises to the peroxisome. The catalysed reaction is a long chain fatty alcohol + a 1-acylglycerone 3-phosphate = a 1-O-alkylglycerone 3-phosphate + a long-chain fatty acid + H(+). It carries out the reaction hexadecan-1-ol + 1-hexadecanoylglycerone 3-phosphate = 1-O-hexadecylglycerone 3-phosphate + hexadecanoate + H(+). The enzyme catalyses 1-hexadecanoylglycerone 3-phosphate + a long-chain fatty acid = a 1-acylglycerone 3-phosphate + hexadecanoate. It participates in glycerolipid metabolism; ether lipid biosynthesis. Its activity is regulated as follows. Inhibited by N-ethylmaleimide, p-bromophenacylbromide, 2,4- dinitrofluorobenzene and divalent cations such as such as Mn(2+), Mg(2+) and Zn(2+). Inhibition by p-bromophenacylbromide is strongly pH dependent and is highest at alkaline conditions. Catalyzes the exchange of the acyl chain in acyl-dihydroxyacetonephosphate (acyl-DHAP) for a long chain fatty alcohol, yielding the first ether linked intermediate, i.e. alkyl-dihydroxyacetonephosphate (alkyl-DHAP), in the pathway of ether lipid biosynthesis. This Cavia porcellus (Guinea pig) protein is Alkyldihydroxyacetonephosphate synthase, peroxisomal (AGPS).